The primary structure comprises 126 residues: Late histone H2A.3, gonadal (126 aa).

Basic residues predominate over residues 1–18 (MSGRGKGAKAKGKAKSRS). The tract at residues 1–21 (MSGRGKGAKAKGKAKSRSSRA) is disordered. N-acetylserine is present on serine 2. Position 2 is a phosphoserine (serine 2). Residue glutamine 104 is modified to N5-methylglutamine. A Glycyl lysine isopeptide (Lys-Gly) (interchain with G-Cter in ubiquitin) cross-link involves residue lysine 119.

Belongs to the histone H2A family. As to quaternary structure, the nucleosome is a histone octamer containing two molecules each of H2A, H2B, H3 and H4 assembled in one H3-H4 heterotetramer and two H2A-H2B heterodimers. The octamer wraps approximately 147 bp of DNA. Monoubiquitination of Lys-119 gives a specific tag for epigenetic transcriptional repression. In terms of processing, phosphorylation of Ser-2 directly represses transcription.

The protein localises to the nucleus. It localises to the chromosome. Core component of nucleosome. Nucleosomes wrap and compact DNA into chromatin, limiting DNA accessibility to the cellular machineries which require DNA as a template. Histones thereby play a central role in transcription regulation, DNA repair, DNA replication and chromosomal stability. DNA accessibility is regulated via a complex set of post-translational modifications of histones, also called histone code, and nucleosome remodeling. The sequence is that of Late histone H2A.3, gonadal from Psammechinus miliaris (Green sea urchin).